Here is a 291-residue protein sequence, read N- to C-terminus: Trimeric intracellular cation channel type B (291 aa).

The Lumenal segment spans residues 1–19; sequence MDSPWDELALAFSRTSMFP. Residues 20 to 33 form a helical membrane-spanning segment; sequence FFDIAHYLVSVMAV. The Cytoplasmic portion of the chain corresponds to 34–50; that stretch reads KRQPGAAALAWKNPISS. A helical transmembrane segment spans residues 51–70; that stretch reads WFTAMLHCFGGGILSCLLLA. Over 71-82 the chain is Lumenal; sequence EPPLKFLANHTN. The helical transmembrane segment at 83–99 threads the bilayer; the sequence is ILLASSIWYITFFCPHD. Residues 100-104 are Cytoplasmic-facing; that stretch reads LVSQG. Residues 105 to 121 form a helical membrane-spanning segment; the sequence is YSYLPVQLLASGMKEVT. A 1,2-diacyl-sn-glycero-3-phospho-(1D-myo-inositol-4,5-bisphosphate) contacts are provided by Lys-118 and Arg-122. Residues 122–139 lie on the Lumenal side of the membrane; it reads RTWKIVGGVTHANSYYKN. A helical transmembrane segment spans residues 140–156; that stretch reads GWIVMIAIGWARGAGGT. Topologically, residues 157-179 are cytoplasmic; the sequence is IITNFERLVKGDWKPEGDEWLKM. The chain crosses the membrane as a helical span at residues 180–195; that stretch reads SYPAKVTLLGSVIFTF. Topologically, residues 196-207 are lumenal; sequence QHTQHLAISKHN. A helical membrane pass occupies residues 208-227; sequence LMFLYTIFIVATKITMMTTQ. Over 228–291 the chain is Cytoplasmic; the sequence is TSTMTFAPFE…VKKKHTKKNE (64 aa). A disordered region spans residues 256–291; the sequence is KKSEAKSPSNGVGSLASKPVDVASDNVKKKHTKKNE. Ser-262 bears the Phosphoserine mark.

Belongs to the TMEM38 family. Homotrimer; conformation seems to be controled by binding to diacylglycerol (DAG).

It localises to the endoplasmic reticulum membrane. The enzyme catalyses K(+)(in) = K(+)(out). With respect to regulation, channel activity is activated by increased cytosolic Ca(2+) levels and blocked by luminal high Ca(2+) levels. Functionally, intracellular monovalent cation channel required for maintenance of rapid intracellular calcium release. Acts as a potassium counter-ion channel that functions in synchronization with calcium release from intracellular stores. Activated by increased cytosolic Ca(2+) levels. This Homo sapiens (Human) protein is Trimeric intracellular cation channel type B.